The chain runs to 121 residues: Ribosome-binding factor A (121 aa).

The protein belongs to the RbfA family. As to quaternary structure, monomer. Binds 30S ribosomal subunits, but not 50S ribosomal subunits or 70S ribosomes.

The protein localises to the cytoplasm. In terms of biological role, one of several proteins that assist in the late maturation steps of the functional core of the 30S ribosomal subunit. Associates with free 30S ribosomal subunits (but not with 30S subunits that are part of 70S ribosomes or polysomes). Required for efficient processing of 16S rRNA. May interact with the 5'-terminal helix region of 16S rRNA. This chain is Ribosome-binding factor A, found in Clostridium novyi (strain NT).